The sequence spans 214 residues: MSKPLTIALSKGRILKETLPLLKAAGIELLEDPAASRKLIFDTTRDDVKIIIIRATDVPPYVQHGAADIGVAGKDVLMEHGGDGVFEPVDLDIARCKLMVAAMKDAPETGSRLRVATKFVNVAKAYYAQQGKQAEVIKLYGAMELAPLVGLADRIVDIVDTGNTLRANGLEPTELIAHISTRVIVNRASMKTRHSDIQTILDKLVEAVASRKAG.

It belongs to the ATP phosphoribosyltransferase family. Short subfamily. In terms of assembly, heteromultimer composed of HisG and HisZ subunits.

It is found in the cytoplasm. The enzyme catalyses 1-(5-phospho-beta-D-ribosyl)-ATP + diphosphate = 5-phospho-alpha-D-ribose 1-diphosphate + ATP. It functions in the pathway amino-acid biosynthesis; L-histidine biosynthesis; L-histidine from 5-phospho-alpha-D-ribose 1-diphosphate: step 1/9. Its function is as follows. Catalyzes the condensation of ATP and 5-phosphoribose 1-diphosphate to form N'-(5'-phosphoribosyl)-ATP (PR-ATP). Has a crucial role in the pathway because the rate of histidine biosynthesis seems to be controlled primarily by regulation of HisG enzymatic activity. The sequence is that of ATP phosphoribosyltransferase from Alcanivorax borkumensis (strain ATCC 700651 / DSM 11573 / NCIMB 13689 / SK2).